The sequence spans 132 residues: Small ribosomal subunit protein uS8 (132 aa).

The protein belongs to the universal ribosomal protein uS8 family. Part of the 30S ribosomal subunit. Contacts proteins S5 and S12.

In terms of biological role, one of the primary rRNA binding proteins, it binds directly to 16S rRNA central domain where it helps coordinate assembly of the platform of the 30S subunit. The sequence is that of Small ribosomal subunit protein uS8 from Bacillus mycoides (strain KBAB4) (Bacillus weihenstephanensis).